A 111-amino-acid chain; its full sequence is Universal stress protein B (111 aa).

2 helical membrane passes run 1 to 21 (MINT…NMLR) and 90 to 110 (FILT…LMLW).

Belongs to the universal stress protein B family.

It is found in the cell inner membrane. The sequence is that of Universal stress protein B from Edwardsiella ictaluri (strain 93-146).